The primary structure comprises 660 residues: Elongation factor 4 (660 aa).

The tr-type G domain occupies 55-241; the sequence is AQIRNFCIIA…EVVRQVPPPQ (187 aa). GTP-binding positions include 67–72 and 188–191; these read DHGKST and NKID.

This sequence belongs to the TRAFAC class translation factor GTPase superfamily. Classic translation factor GTPase family. LepA subfamily.

It localises to the cell membrane. The catalysed reaction is GTP + H2O = GDP + phosphate + H(+). Required for accurate and efficient protein synthesis under certain stress conditions. May act as a fidelity factor of the translation reaction, by catalyzing a one-codon backward translocation of tRNAs on improperly translocated ribosomes. Back-translocation proceeds from a post-translocation (POST) complex to a pre-translocation (PRE) complex, thus giving elongation factor G a second chance to translocate the tRNAs correctly. Binds to ribosomes in a GTP-dependent manner. The protein is Elongation factor 4 of Mycolicibacterium paratuberculosis (strain ATCC BAA-968 / K-10) (Mycobacterium paratuberculosis).